Consider the following 534-residue polypeptide: Blue-light-activated protein (534 aa).

Residues 20–93 enclose the PAS domain; sequence GKDIFFAAVE…QSIRDAIDQR (74 aa). At C70 the chain carries S-4a-FMN cysteine. In terms of domain architecture, PAC spans 94–148; it reads VDISTEILNYRKDGSSFWNALFISPVYNDAGELIYFFASQLDISRRRDAEEALRQ. One can recognise a Histidine kinase domain in the interval 161 to 390; sequence GIAHDFNNLL…TLRLYFPVDE (230 aa). H164 is modified (phosphohistidine; by autocatalysis). The Response regulatory domain maps to 411 to 527; sequence RILIVEDRPD…DLARKVRQVL (117 aa). D461 carries the post-translational modification 4-aspartylphosphate.

Post-translationally, FMN binds covalently to cysteine after exposure to blue light and this bond is spontaneously broken in the dark.

It catalyses the reaction ATP + protein L-histidine = ADP + protein N-phospho-L-histidine.. Its function is as follows. Photosensitive kinase and response regulator that is involved in increased bacterial virulence upon exposure to light. This chain is Blue-light-activated protein, found in Pseudomonas syringae pv. syringae (strain B728a).